The primary structure comprises 524 residues: Bifunctional purine biosynthesis protein PurH (524 aa).

One can recognise an MGS-like domain in the interval M1–V144.

The protein belongs to the PurH family.

The enzyme catalyses (6R)-10-formyltetrahydrofolate + 5-amino-1-(5-phospho-beta-D-ribosyl)imidazole-4-carboxamide = 5-formamido-1-(5-phospho-D-ribosyl)imidazole-4-carboxamide + (6S)-5,6,7,8-tetrahydrofolate. It carries out the reaction IMP + H2O = 5-formamido-1-(5-phospho-D-ribosyl)imidazole-4-carboxamide. Its pathway is purine metabolism; IMP biosynthesis via de novo pathway; 5-formamido-1-(5-phospho-D-ribosyl)imidazole-4-carboxamide from 5-amino-1-(5-phospho-D-ribosyl)imidazole-4-carboxamide (10-formyl THF route): step 1/1. It functions in the pathway purine metabolism; IMP biosynthesis via de novo pathway; IMP from 5-formamido-1-(5-phospho-D-ribosyl)imidazole-4-carboxamide: step 1/1. This chain is Bifunctional purine biosynthesis protein PurH, found in Anaeromyxobacter sp. (strain K).